We begin with the raw amino-acid sequence, 328 residues long: Ethanol acetyltransferase 1 (328 aa).

The 271-residue stretch at proline 39–proline 309 folds into the AB hydrolase-1 domain. Catalysis depends on charge relay system residues serine 115, aspartate 139, and histidine 302.

It belongs to the AB hydrolase superfamily.

It is found in the mitochondrion. It catalyses the reaction ethanol + acetyl-CoA = ethyl acetate + CoA. It carries out the reaction acetyl-CoA + H2O = acetate + CoA + H(+). The enzyme catalyses ethyl acetate + H2O = ethanol + acetate + H(+). Functionally, alcohol acetyltransferase that catalyzes the synthesis of ethyl acetate from ethanol and acetyl-CoA. Can also function as a thioesterase by hydrolyzing acetyl-CoA in the absence of ethanol, as well as esterase hydrolyzing ethyl acetate. The protein is Ethanol acetyltransferase 1 of Saccharomyces cerevisiae (strain ATCC 204508 / S288c) (Baker's yeast).